Here is a 230-residue protein sequence, read N- to C-terminus: 2,3-bisphosphoglycerate-dependent phosphoglycerate mutase (230 aa).

Substrate is bound by residues 8–15 (RHGQSIWN), 21–22 (TG), Arg60, 87–90 (ERHY), Lys98, and 114–115 (RR). His9 serves as the catalytic Tele-phosphohistidine intermediate. Residue Glu87 is the Proton donor/acceptor of the active site. Positions 117-143 (YDTPPPALDAEDERHPRHDPRYAGLDP) are disordered. Over residues 128-137 (DERHPRHDPR) the composition is skewed to basic and acidic residues. Substrate is bound at residue 183-184 (GN).

This sequence belongs to the phosphoglycerate mutase family. BPG-dependent PGAM subfamily. As to quaternary structure, homodimer.

The catalysed reaction is (2R)-2-phosphoglycerate = (2R)-3-phosphoglycerate. The protein operates within carbohydrate degradation; glycolysis; pyruvate from D-glyceraldehyde 3-phosphate: step 3/5. Catalyzes the interconversion of 2-phosphoglycerate and 3-phosphoglycerate. The polypeptide is 2,3-bisphosphoglycerate-dependent phosphoglycerate mutase (Halorhodospira halophila (strain DSM 244 / SL1) (Ectothiorhodospira halophila (strain DSM 244 / SL1))).